A 167-amino-acid chain; its full sequence is Acetolactate synthase small subunit (167 aa).

The region spanning 7–81 is the ACT domain; the sequence is TLSVLVEAKP…NVIKIVELED (75 aa).

This sequence belongs to the acetolactate synthase small subunit family. Dimer of large and small chains.

It carries out the reaction 2 pyruvate + H(+) = (2S)-2-acetolactate + CO2. Its pathway is amino-acid biosynthesis; L-isoleucine biosynthesis; L-isoleucine from 2-oxobutanoate: step 1/4. It participates in amino-acid biosynthesis; L-valine biosynthesis; L-valine from pyruvate: step 1/4. The polypeptide is Acetolactate synthase small subunit (ilvH) (Mycobacterium avium).